A 418-amino-acid polypeptide reads, in one-letter code: Thyroid hormone receptor alpha-A (418 aa).

Residues 1–38 (MDQNLSGLDCLSEPDEKRWPDGKRKRKNSQCMGKSGMS) are disordered. The segment at 1 to 60 (MDQNLSGLDCLSEPDEKRWPDGKRKRKNSQCMGKSGMSGDSLVSLPSAGYIPSYLDKDEP) is modulating. 2 consecutive NR C4-type zinc fingers follow at residues 61–81 (CVVCSDKATGYHYRCITCEGC) and 99–123 (CKYDGCCIIDKITRNQCQLCRFKKC). The nuclear receptor DNA-binding region spans 61–135 (CVVCSDKATG…VGMAMDLVLD (75 aa)). Residues 171–415 (EEWELIRIVT…PPLFLEVFED (245 aa)) enclose the NR LBD domain.

It belongs to the nuclear hormone receptor family. NR1 subfamily. Binds to thyroid hormone receptor element (TRE) weakly as homodimers and monomers, but binds TRE with much higher affinity as heterodimers with retinoid X receptors. Can bind DNA as a heterodimer with either rxra or rxrg.

The protein resides in the nucleus. In terms of biological role, high affinity receptor for triiodothyronine (T3). This chain is Thyroid hormone receptor alpha-A (thra-a), found in Xenopus laevis (African clawed frog).